The chain runs to 329 residues: NAC domain-containing protein 71 (329 aa).

Positions 9-166 (LPPGFRFHPT…DWVLCRIYNK (158 aa)) constitute an NAC domain. A disordered region spans residues 228–281 (RSGSADRDSMPRLHTDSSGSEHVLSPSPSPDDFPGGGDHDYAESQPSGGCGGWP). Basic and acidic residues predominate over residues 230 to 242 (GSADRDSMPRLHT).

In terms of assembly, interacts with NAC048 and NAC002. Expressed in roots and embryo. Weakly expressed in callus.

The protein localises to the nucleus. Functionally, transcription activator that binds to the promoter of the stress response gene LEA19. Involved in tolerance to abiotic stresses. The polypeptide is NAC domain-containing protein 71 (Oryza sativa subsp. japonica (Rice)).